We begin with the raw amino-acid sequence, 134 residues long: Protein PsiE homolog (134 aa).

4 helical membrane passes run 14–34 (LQWI…IFLI), 56–76 (VESI…IKYF), 82–102 (FPLR…IIVS), and 106–126 (PMET…LYIS).

Belongs to the PsiE family.

The protein resides in the cell membrane. This is Protein PsiE homolog from Bacillus anthracis.